Here is a 126-residue protein sequence, read N- to C-terminus: Ribonuclease P protein component (126 aa).

This sequence belongs to the RnpA family. In terms of assembly, consists of a catalytic RNA component (M1 or rnpB) and a protein subunit.

It carries out the reaction Endonucleolytic cleavage of RNA, removing 5'-extranucleotides from tRNA precursor.. Functionally, RNaseP catalyzes the removal of the 5'-leader sequence from pre-tRNA to produce the mature 5'-terminus. It can also cleave other RNA substrates such as 4.5S RNA. The protein component plays an auxiliary but essential role in vivo by binding to the 5'-leader sequence and broadening the substrate specificity of the ribozyme. The sequence is that of Ribonuclease P protein component from Rhodococcus erythropolis (strain PR4 / NBRC 100887).